Here is a 505-residue protein sequence, read N- to C-terminus: Nostrin (505 aa).

Residues 1-260 enclose the F-BAR domain; it reads MRDPLTDCSY…AISKIDIEKD (260 aa). Coiled-coil stretches lie at residues 101–128, 160–222, and 295–332; these read AHQVLSAHEKKRKSLENEVEKTANLVIS, ITTE…RIQL, and KERQTSSIKSKLLRLQKDIEKASRDQEGLERMLRAYSS. Residue Ser-114 is modified to Phosphoserine. One can recognise an REM-1 domain in the interval 292 to 372; the sequence is AMSKERQTSS…SYKLSSVLAE (81 aa). The SH3 domain maps to 437 to 496; it reads LGNGLCKALYPFQARQDDELDLEKGDIVTIHKKKDEGWWFGSLKGKKGHFPAAYVEELPL. Phosphoserine is present on Ser-478.

Homotrimer. Interacts with DAB2. Interacts with NOS3, DNM2, WASL and CAV1. Interacts (via SH3 domain) with DNM2; this interaction allows the recruitment of NOS3 to dynamin-positive structures. Present in pulmonary arterial endothelial cells (at protein level).

It is found in the cell membrane. It localises to the cytoplasmic vesicle. Its subcellular location is the cytoplasm. The protein localises to the cytoskeleton. In terms of biological role, multivalent adapter protein which may decrease NOS3 activity by inducing its translocation away from the plasma membrane. In Bos taurus (Bovine), this protein is Nostrin.